Consider the following 318-residue polypeptide: tRNA-cytidine(32) 2-sulfurtransferase (318 aa).

The short motif at 52–57 (SGGKDS) is the PP-loop motif element. The [4Fe-4S] cluster site is built by cysteine 127, cysteine 130, and cysteine 218.

This sequence belongs to the TtcA family. In terms of assembly, homodimer. The cofactor is Mg(2+). It depends on [4Fe-4S] cluster as a cofactor.

The protein resides in the cytoplasm. It catalyses the reaction cytidine(32) in tRNA + S-sulfanyl-L-cysteinyl-[cysteine desulfurase] + AH2 + ATP = 2-thiocytidine(32) in tRNA + L-cysteinyl-[cysteine desulfurase] + A + AMP + diphosphate + H(+). Its pathway is tRNA modification. Functionally, catalyzes the ATP-dependent 2-thiolation of cytidine in position 32 of tRNA, to form 2-thiocytidine (s(2)C32). The sulfur atoms are provided by the cysteine/cysteine desulfurase (IscS) system. This chain is tRNA-cytidine(32) 2-sulfurtransferase, found in Actinobacillus pleuropneumoniae serotype 5b (strain L20).